Reading from the N-terminus, the 238-residue chain is Dof zinc finger protein MNB1A (238 aa).

The segment covering M1 to E13 has biased composition (low complexity). The disordered stretch occupies residues M1–P48. Residues D47–S101 form a Dof-type zinc finger. Residues C49, C52, C74, and C77 each coordinate Zn(2+). Residues G85–E155 form a disordered region. Residues P119 to V130 are compositionally biased toward basic residues. The segment covering A138–E155 has biased composition (low complexity).

In terms of tissue distribution, expressed in all tissues examined.

Its subcellular location is the nucleus. In terms of biological role, transcription factor that binds specifically to a 5'-AA[AG]G-3' consensus core sequence at the MNF1-binding site. This is Dof zinc finger protein MNB1A (MNB1A) from Zea mays (Maize).